A 148-amino-acid chain; its full sequence is Glycine cleavage system H protein 5 (148 aa).

A Lipoyl-binding domain is found at 33-115; it reads VFTIGLTSVA…YGQGWIAKVK (83 aa). N6-lipoyllysine is present on Lys-74.

Belongs to the GcvH family. In terms of assembly, the glycine cleavage system is composed of four proteins: P, T, L and H. (R)-lipoate is required as a cofactor.

Functionally, the glycine cleavage system catalyzes the degradation of glycine. The H protein shuttles the methylamine group of glycine from the P protein to the T protein. In Aquifex aeolicus (strain VF5), this protein is Glycine cleavage system H protein 5.